Reading from the N-terminus, the 189-residue chain is Phosphoheptose isomerase (189 aa).

In terms of domain architecture, SIS spans 34–189 (LADSLAGGRK…CDLVEKRLFP (156 aa)). 49-51 (NGG) contacts substrate. Zn(2+) is bound by residues H58 and E62. Substrate is bound by residues E62, 91–92 (ND), 117–119 (STS), S122, and Q169. Zn(2+)-binding residues include Q169 and H177.

It belongs to the SIS family. GmhA subfamily. In terms of assembly, homotetramer. Zn(2+) serves as cofactor.

It is found in the cytoplasm. It carries out the reaction 2 D-sedoheptulose 7-phosphate = D-glycero-alpha-D-manno-heptose 7-phosphate + D-glycero-beta-D-manno-heptose 7-phosphate. It participates in carbohydrate biosynthesis; D-glycero-D-manno-heptose 7-phosphate biosynthesis; D-glycero-alpha-D-manno-heptose 7-phosphate and D-glycero-beta-D-manno-heptose 7-phosphate from sedoheptulose 7-phosphate: step 1/1. Catalyzes the isomerization of sedoheptulose 7-phosphate in D-glycero-D-manno-heptose 7-phosphate. The chain is Phosphoheptose isomerase from Geobacter sulfurreducens (strain ATCC 51573 / DSM 12127 / PCA).